Reading from the N-terminus, the 226-residue chain is MEGNGSVDMFSEVLENQFLQAAKLVENHLDSEIQKLDQIGEDELELLKEKRLAALRKAQQQKQEWLSKGHGEYREIGSERDFFQEVKESEKVVCHFYRDTTFRCKILDRHLAILAKKHLETKFLKLNVEKAPFLCERLRIKVIPTLALLRDGKTQDYVVGFTDLGNTDDFTTETLEWRLGCSDVINYSGNLMEPPFQSQKKFGTNFTKLEKKTIRGKKYDSDSDDD.

The region spanning 75–180 is the Thioredoxin domain; it reads EIGSERDFFQ…TTETLEWRLG (106 aa). A phosphoserine mark is found at Ser-188, Ser-221, and Ser-223.

Forms ternary complexes with the chaperonin TCP1 complex, spanning the cylindrical chaperonin cavity and contacting at least 2 subunits. In terms of tissue distribution, expressed in testis, liver, heart, kidney, brain, spleen and lung.

The protein resides in the cytoplasm. It is found in the nucleus. The protein localises to the cytoskeleton. Its subcellular location is the microtubule organizing center. It localises to the centrosome. The protein resides in the midbody. Its function is as follows. Significantly diminishes the chaperonin TCP1 complex ATPase activity, thus negatively impacts protein folding, including that of actin or tubulin. This chain is Thioredoxin domain-containing protein 9 (Txndc9), found in Mus musculus (Mouse).